We begin with the raw amino-acid sequence, 518 residues long: Glutamate--cysteine ligase (518 aa).

Belongs to the glutamate--cysteine ligase type 1 family. Type 1 subfamily.

The enzyme catalyses L-cysteine + L-glutamate + ATP = gamma-L-glutamyl-L-cysteine + ADP + phosphate + H(+). It participates in sulfur metabolism; glutathione biosynthesis; glutathione from L-cysteine and L-glutamate: step 1/2. This chain is Glutamate--cysteine ligase, found in Shigella boydii serotype 4 (strain Sb227).